The sequence spans 469 residues: Mitochondrial adenyl nucleotide antiporter SLC25A25 (469 aa).

The segment at 1 to 165 is regulatory N-terminal domain; sequence MLCLCLYVPV…LYWKHSTIFD (165 aa). Residues 1–189 lie on the Mitochondrial intermembrane side of the membrane; it reads MLCLCLYVPV…ERQTGMWWRH (189 aa). 3 consecutive EF-hand domains span residues 47–80, 78–113, and 114–149; these read TYRQ…QDHE, DHEK…LGVK, and ISEQ…HPVE. Ca(2+)-binding residues include Asp60, Asp62, Asp64, Gln66, and Glu71. Residues 151-160 are linker region; sequence IPEIILYWKH. The segment at 166–469 is C-terminal transmembrane transporter domain; that stretch reads VGENLTVPDE…LKITLGVQSR (304 aa). Solcar repeat units follow at residues 184 to 270, 278 to 363, and 375 to 463; these read GMWW…IKRL, LRIH…LKNA, and PGVF…LKIT. Residues 190–207 form a helical membrane-spanning segment; that stretch reads LVAGGGAGAVSRTCTAPL. Residues 208–244 are Mitochondrial matrix-facing; it reads DRLKVLMQVHASRSNNMGIVGGFTQMIREGGARSLWR. A helical membrane pass occupies residues 245-264; sequence GNGINVLKIAPESAIKFMAY. Residues 265 to 287 lie on the Mitochondrial intermembrane side of the membrane; the sequence is EQIKRLVGSDQETLRIHERLVAG. The chain crosses the membrane as a helical span at residues 288 to 301; the sequence is SLAGAIAQSSIYPM. Residues 302 to 337 lie on the Mitochondrial matrix side of the membrane; it reads EVLKTRMALRKTGQYSGMLDCARRILAREGVAAFYK. The helical transmembrane segment at 338–357 threads the bilayer; sequence GYVPNMLGIIPYAGIDLAVY. At 358 to 380 the chain is on the mitochondrial intermembrane side; the sequence is ETLKNAWLQHYAVNSADPGVFVL. A helical transmembrane segment spans residues 381-398; sequence LACGTMSSTCGQLASYPL. Over 399–437 the chain is Mitochondrial matrix; it reads ALVRTRMQAQASIEGAPEVTMSSLFKHILRTEGAFGLYR. Residues 438–457 traverse the membrane as a helical segment; sequence GLAPNFMKVIPAVSISYVVY. Residues 458 to 469 are Mitochondrial intermembrane-facing; that stretch reads ENLKITLGVQSR.

Belongs to the mitochondrial carrier (TC 2.A.29) family. Widely expressed. Expressed in fetal and adult liver, skeletal muscle, testis, ovary, hippocampus and caudate nucleus. As to expression, expressed in all tissues tested. In terms of tissue distribution, expression is restricted to kidney and lung.

Its subcellular location is the mitochondrion inner membrane. It catalyses the reaction Mg(2+)(out) + phosphate(in) + ATP(out) = Mg(2+)(in) + phosphate(out) + ATP(in). Activated by an increase in cytosolic calcium levels that induce a conformational change of the N-terminal regulatory domain, uncapping the channel and allowing transport. In terms of biological role, electroneutral antiporter that most probably mediates the transport of adenyl nucleotides through the inner mitochondrial membrane. Originally identified as an ATP-magnesium/inorganic phosphate antiporter, it could have a broader specificity for adenyl nucleotides. By regulating the mitochondrial matrix adenyl nucleotide pool could adapt to changing cellular energetic demands and indirectly regulate adenyl nucleotide-dependent metabolic pathways. The chain is Mitochondrial adenyl nucleotide antiporter SLC25A25 from Homo sapiens (Human).